The following is a 1077-amino-acid chain: ATP-dependent helicase HRQ1 (1077 aa).

The Helicase ATP-binding domain maps to 299–483 (INSLHQGENV…DMFGINEVTL (185 aa)). Position 312 to 319 (312 to 319 (TSTSSGKS)) interacts with ATP. A DEAH box motif is present at residues 423 to 426 (DELH). The region spanning 521–678 (ILVQLILNNV…DLVLDFNNIL (158 aa)) is the Helicase C-terminal domain.

It belongs to the helicase family. HRQ1 subfamily. As to quaternary structure, forms heptamer rings. Interacts with RAD4. Mg(2+) serves as cofactor.

It localises to the nucleus. The enzyme catalyses Couples ATP hydrolysis with the unwinding of duplex DNA by translocating in the 3'-5' direction.. It carries out the reaction ATP + H2O = ADP + phosphate + H(+). Its function is as follows. Helicase with 3'-5' helicase activity involved in genome stability. Functions in the RAD4-dependent nucleotide excision repair (NER) pathway and plays a critical role in DNA interstrand cross-link repair. Unwinds relatively long duplex DNA up to 120-bp and requires a long 3'-tail of at least 70 nucleotides for efficient unwinding of duplex DNA. Activity is significantly stimulated by a preexisting fork structure. Shows both processive helicase and DNA strand annealing activities. Affects telomere length by a non-catalytic mechanism, probably through inhibiting telomerase by competing with it for ssDNA binding. The chain is ATP-dependent helicase HRQ1 from Saccharomyces cerevisiae (strain ATCC 204508 / S288c) (Baker's yeast).